Consider the following 160-residue polypeptide: Cytochrome b6-f complex subunit 4 (160 aa).

Helical transmembrane passes span 36–56 (LLYI…GLAV), 95–115 (LLGI…PFIE), and 131–151 (TVFL…ALPI).

The protein belongs to the cytochrome b family. PetD subfamily. The 4 large subunits of the cytochrome b6-f complex are cytochrome b6, subunit IV (17 kDa polypeptide, PetD), cytochrome f and the Rieske protein, while the 4 small subunits are PetG, PetL, PetM and PetN. The complex functions as a dimer.

Its subcellular location is the cellular thylakoid membrane. In terms of biological role, component of the cytochrome b6-f complex, which mediates electron transfer between photosystem II (PSII) and photosystem I (PSI), cyclic electron flow around PSI, and state transitions. The chain is Cytochrome b6-f complex subunit 4 from Parasynechococcus marenigrum (strain WH8102).